Here is a 131-residue protein sequence, read N- to C-terminus: Holo-[acyl-carrier-protein] synthase (131 aa).

2 residues coordinate Mg(2+): D9 and E58.

The protein belongs to the P-Pant transferase superfamily. AcpS family. Mg(2+) serves as cofactor.

Its subcellular location is the cytoplasm. The enzyme catalyses apo-[ACP] + CoA = holo-[ACP] + adenosine 3',5'-bisphosphate + H(+). In terms of biological role, transfers the 4'-phosphopantetheine moiety from coenzyme A to a Ser of acyl-carrier-protein. The sequence is that of Holo-[acyl-carrier-protein] synthase from Salmonella arizonae (strain ATCC BAA-731 / CDC346-86 / RSK2980).